The chain runs to 633 residues: DNA mismatch repair protein MutL (633 aa).

Disordered regions lie at residues 337-364 (RPDDQLAPPGATSLTEPRPTGAAAGEFG) and 383-405 (VGWSGGSSASGGSSGYSAYTRPE). Residues 385–396 (WSGGSSASGGSS) show a composition bias toward gly residues.

The protein belongs to the DNA mismatch repair MutL/HexB family.

Its function is as follows. This protein is involved in the repair of mismatches in DNA. It is required for dam-dependent methyl-directed DNA mismatch repair. May act as a 'molecular matchmaker', a protein that promotes the formation of a stable complex between two or more DNA-binding proteins in an ATP-dependent manner without itself being part of a final effector complex. The sequence is that of DNA mismatch repair protein MutL from Pseudomonas aeruginosa (strain LESB58).